The sequence spans 350 residues: Aldo-keto reductase 1B (350 aa).

The Proton donor role is filled by Y84. Residue H146 participates in substrate binding. 244 to 306 (SPLGSPNRPW…SVTKDRIESN (63 aa)) is a binding site for NADP(+).

It belongs to the aldo/keto reductase family.

It localises to the cytoplasm. It catalyses the reaction an alditol + NADP(+) = an aldose + NADPH + H(+). The enzyme catalyses all-trans-retinol + NADP(+) = all-trans-retinal + NADPH + H(+). The catalysed reaction is 9-cis-retinol + NADP(+) = 9-cis-retinal + NADPH + H(+). It carries out the reaction 13-cis-retinol + NADP(+) = 13-cis-retinal + NADPH + H(+). It catalyses the reaction glycerol + NADP(+) = D-glyceraldehyde + NADPH + H(+). The enzyme catalyses glycerol + NADP(+) = L-glyceraldehyde + NADPH + H(+). The catalysed reaction is prenol + NADP(+) = 3-methyl-2-butenal + NADPH + H(+). It carries out the reaction (E)-hex-2-en-1-ol + NADP(+) = (E)-hex-2-enal + NADPH + H(+). It catalyses the reaction (E,E)-2,4-hexadien-1-ol + NADP(+) = (E,E)-2,4-hexadienal + NADPH + H(+). The enzyme catalyses a 4-hydroxynonen-1-ol + NADP(+) = a 4-hydroxynonenal + NADPH + H(+). The catalysed reaction is prostaglandin F2alpha + NADP(+) = prostaglandin H2 + NADPH + H(+). It carries out the reaction allyl alcohol + NADP(+) = acrolein + NADPH + H(+). It catalyses the reaction pyridine 3-methanol + NADP(+) = pyridine-3-carbaldehyde + NADPH + H(+). The enzyme catalyses 1-hexadecanoyl-2-(5-oxopentanoyl)-sn-glycero-3-phosphocholine + NADPH + H(+) = 1-hexadecanoyl-2-(5-hydroxypentanoyl)-sn-glycero-3-phosphocholine + NADP(+). The catalysed reaction is 1-hexadecanoyl-2-(7-oxoheptanoyl)-sn-glycero-3-phosphocholine + NADPH + H(+) = 1-hexadecanoyl-2-(7-hydroxyheptanoyl)-sn-glycero-3-phosphocholine + NADP(+). It carries out the reaction 1-hexadecanoyl-2-(9-oxononanoyl)-sn-glycero-3-phosphocholine + NADPH + H(+) = 1-hexadecanoyl-2-(9-hydroxynonanoyl)-sn-glycero-3-phosphocholine + NADP(+). It catalyses the reaction 1-hexadecanoyl-2-(5-oxopentanoyl)-sn-glycero-3-phosphoethanolamine + NADPH + H(+) = 1-hexadecanoyl-2-(5-hydroxypentanoyl)-sn-glycero-3-phosphoethanolamine + NADP(+). Catalyzes the NADPH-dependent reduction of a wide variety of carbonyl-containing compounds to their corresponding alcohols. Displays enzymatic activity towards endogenous metabolites such as aromatic and aliphatic aldehydes, ketones, monosaccharides, bile acids and xenobiotics substrates. Key enzyme in the polyol pathway, catalyzes reduction of glucose to sorbitol during hyperglycemia. Reduces steroids and their derivatives and prostaglandins. Through production of prostaglandin F2alpha may regulate the activity of non-muscle myosin II in an autocrine or paracrine fashion; influences border cell and nurse cell stiffness to facilitate border cell cluster migration. Also regulates the cell surface localization of integrins in an autocrine or paracrine fashion; influences border cell adhesion to maintain border cell cluster morphology. In hemocytes, probably contributes to production of sugar alcohols in the hemolymph, which act as alarmins involved in gut-fat body innate immunological communication (GFIC); leads to activation of the imd/Relish signaling pathway in the fat body. This is Aldo-keto reductase 1B from Drosophila melanogaster (Fruit fly).